The chain runs to 122 residues: Large ribosomal subunit protein uL14c (122 aa).

Belongs to the universal ribosomal protein uL14 family. In terms of assembly, part of the 50S ribosomal subunit.

It localises to the plastid. Its subcellular location is the chloroplast. Binds to 23S rRNA. The protein is Large ribosomal subunit protein uL14c of Coffea arabica (Arabian coffee).